We begin with the raw amino-acid sequence, 665 residues long: FAD-dependent oxidoreductase domain-containing protein 2 (665 aa).

A signal peptide spans 1 to 17; that stretch reads MGPSGLLVALALHLAVC. An N-linked (GlcNAc...) asparagine glycan is attached at Asn136. Positions 642–665 are disordered; that stretch reads RWLGDHSTAPEPLTQSLDSNKEEL. A Prevents secretion from ER motif is present at residues 662–665; the sequence is KEEL.

The protein belongs to the FOXRED2 family. In terms of assembly, interacts with SEL1L. May interact with OS9 and DNAJC10. Interacts with TXNDC16. FAD serves as cofactor. Post-translationally, N-glycosylated.

It is found in the endoplasmic reticulum lumen. Functionally, probable flavoprotein which may function in endoplasmic reticulum associated degradation (ERAD). May bind non-native proteins in the endoplasmic reticulum and target them to the ubiquitination machinery for subsequent degradation. The sequence is that of FAD-dependent oxidoreductase domain-containing protein 2 from Mus musculus (Mouse).